Reading from the N-terminus, the 438-residue chain is Serine--tRNA ligase (438 aa).

Residue 245–247 (TSE) participates in L-serine binding. 276 to 278 (RSE) serves as a coordination point for ATP. Glu299 provides a ligand contact to L-serine. Position 363–366 (363–366 (EISS)) interacts with ATP. Ser398 contributes to the L-serine binding site.

Belongs to the class-II aminoacyl-tRNA synthetase family. Type-1 seryl-tRNA synthetase subfamily. Homodimer. The tRNA molecule binds across the dimer.

The protein resides in the cytoplasm. It carries out the reaction tRNA(Ser) + L-serine + ATP = L-seryl-tRNA(Ser) + AMP + diphosphate + H(+). It catalyses the reaction tRNA(Sec) + L-serine + ATP = L-seryl-tRNA(Sec) + AMP + diphosphate + H(+). It functions in the pathway aminoacyl-tRNA biosynthesis; selenocysteinyl-tRNA(Sec) biosynthesis; L-seryl-tRNA(Sec) from L-serine and tRNA(Sec): step 1/1. In terms of biological role, catalyzes the attachment of serine to tRNA(Ser). Is also able to aminoacylate tRNA(Sec) with serine, to form the misacylated tRNA L-seryl-tRNA(Sec), which will be further converted into selenocysteinyl-tRNA(Sec). In Verminephrobacter eiseniae (strain EF01-2), this protein is Serine--tRNA ligase.